The following is a 3132-amino-acid chain: Toxin CdiA (3132 aa).

A signal peptide (signal) is located at residues 1–32 (MHQPPVRFTYRLLSYLVSAIIAGQPLLPAVGA). The interval 36 to 322 (PQNGAGMDKA…AGGNLSVTGT (287 aa)) is two-partner system transport domain (TPS). Residues 351 to 1378 (GELTAGQNAM…ITMNTAHLLN (1028 aa)) form an FHA-1 region. Residues 1379–1635 (SWDAISASHE…LSLSGASVSS (257 aa)) form a receptor-binding domain (RBD) region. Residues 1636 to 1820 (YPLPSGNNGY…LSPEDITLHN (185 aa)) form a YP domain region. A periplasmic FHA-1 repeat (pFR) region spans residues 1821 to 1859 (GSVISGNNVQLAGGNITNSGSSINAQNDLLLDRTGSIDN). Residues 1930–2526 (RATDSLFMGA…QDSDRYDSRQ (597 aa)) form an FHA-2 region. Disordered regions lie at residues 2195–2228 (TGTGGIGFTTGSSKTTHDRREAGTTQSQSASTIG) and 2456–2497 (AGIN…SGAQ). 2 stretches are compositionally biased toward polar residues: residues 2217 to 2228 (GTTQSQSASTIG) and 2483 to 2497 (VSLTSGRDTTLSGAQ). The tract at residues 2862–2904 (DNLSEQERQQISMLATIASGIAGGLVGNSTSAAGTGAQAGRNS) is pre-toxin (PT) domain. Residues 2905–2908 (VENN) carry the VENN CT cleavage motif motif. The C-terminal effector domain (CT) stretch occupies residues 2909–3121 (AMSGLEGFGT…IGTVTDYQIE (213 aa)).

This sequence in the N-terminal section; belongs to the CdiA toxin family. As to quaternary structure, probably interacts with cognate immunity protein CdiI. Expressed as 303 kDa protein which can be processed to 284 kDa and 195 kDa forms.

The protein localises to the secreted. It localises to the target cell. Its subcellular location is the target cell cytoplasm. Toxic component of a toxin-immunity protein module, which functions as a cellular contact-dependent growth inhibition (CDI) system. CDI modules allow bacteria to communicate with and inhibit the growth of closely related neighboring bacteria (target cell counts decrease 1000- to 10(5)-fold) in a contact-dependent fashion. Inhibitory cells must be in logarithmic (not stationary) phase to inhibit growth of their targets, but protein synthesis is not necessary. The presence of P or S but not type 1 pili protects the target cells against growth inhibition for this CDI. BamA on the outer membrane of target cells acts as a receptor for CdiA, while target cell multidrug efflux pump AcrB facilitates its transport into the cytoplasm. Outer membrane receptor function is dependent on extracellular loops of BamA. Cells undergoing CDI show a 2- to 5-fold reversible decrease in aerobic respiration, proton motive force and steady-state ATP levels, suggesting this CT module is an ionophore that disrupts the target cell's inner cell membrane. Growth recovery requires an energy source. Cells expressing this protein in the absence of CdiI initially form filaments, some of which contain multiple nucleoids, while others are devoid of nucleoids. CDI cells induce the phage shock response, but pspA is not required for recovery from CDI. CDI is neutralized by its cognate immunity protein CdiI, but not by non-cognate CdiI from other bacteria with different CDI systems. Plays a role in biofilm formation, a region N-terminal to residue 644 is implicated in this receptor-independent cell adhesion. In terms of biological role, the CdiA protein is thought to be exported from the cell through the central lumen of CdiB, the other half of its two-partner system (TPS). The TPS domain probably remains associated with CdiB while the FHA-1 domain forms an extended filament (33 nm long) with the receptor-binding domain (RBD) at its extremity; in the secretion arrested state the C-terminus of the RBD and YP domains form a hairpin-like structure as the FHA-2, PT and CT domains are periplasmic. The YP domain is probably responsible for this arrest at the point where it re-enters the host cell periplasm. Upon binding to a target cell outer membrane receptor (BamA for this CDI) a signal is transmitted to activate secretion. The filament becomes about 5 nm longer, the rest of CdiA is secreted and the FHA-2 domain becomes stably associated with the target cell's outer membrane where it facilitates entry of the toxic CT domain into the target cell periplasm. From there the toxic CT domain is cleaved and gains access to the target cell cytoplasm via an inner membrane protein (multidrug efflux pump AcrB for this CDI). The protein is Toxin CdiA of Escherichia coli.